Reading from the N-terminus, the 293-residue chain is Probable 2-(5''-triphosphoribosyl)-3'-dephosphocoenzyme-A synthase (293 aa).

It belongs to the CitG/MdcB family.

The enzyme catalyses 3'-dephospho-CoA + ATP = 2'-(5''-triphospho-alpha-D-ribosyl)-3'-dephospho-CoA + adenine. Involved in the formation of 2-(5''-phosphoribosyl)-3'-dephosphocoenzyme-A, the prosthetic group of the acyl-carrier protein of the malonate decarboxylase. The sequence is that of Probable 2-(5''-triphosphoribosyl)-3'-dephosphocoenzyme-A synthase from Pseudomonas paraeruginosa (strain DSM 24068 / PA7) (Pseudomonas aeruginosa (strain PA7)).